The sequence spans 205 residues: Spermatogenesis-associated protein 24 (205 aa).

Positions 17-166 (LAFDQLRDVI…QQKQIFRNHM (150 aa)) form a coiled coil. The interval 138–185 (EDILNGKENEIKELQQVISQQKQIFRNHMSDFRIQKQQESYMAQVLDQ) is required for interaction with CBX5 and TBPL1. The interval 180–205 (AQVLDQKHKKASGTRQAHSHQHPREK) is disordered. Basic residues predominate over residues 186–205 (KHKKASGTRQAHSHQHPREK).

It belongs to the SPATA24 family. As to quaternary structure, homodimer. Interacts with CBX3, CBX5, GMNN, GTF2B, TBPL1 and the polycomb proteins PHCF2, RNF2 and SCMH1 but not with CBX1 or PCGF2.

It is found in the cytoplasm. The protein resides in the nucleus. It localises to the nucleolus. The protein localises to the nucleoplasm. In terms of biological role, binds DNA with high affinity but does not bind to TATA boxes. Synergises with GMNN and TBP in activation of TATA box-containing promoters and with GMNN and TBPL1 in activation of the NF1 TATA-less promoter. May play a role in cytoplasm movement and removal during spermiogenesis. In Macaca fascicularis (Crab-eating macaque), this protein is Spermatogenesis-associated protein 24 (SPATA24).